A 325-amino-acid polypeptide reads, in one-letter code: Beta-ketoacyl-[acyl-carrier-protein] synthase III (325 aa).

Residues Cys116 and His252 contribute to the active site. Residues 253–257 form an ACP-binding region; it reads QANLR. Asn282 is an active-site residue.

This sequence belongs to the thiolase-like superfamily. FabH family. In terms of assembly, homodimer.

It localises to the cytoplasm. The enzyme catalyses malonyl-[ACP] + acetyl-CoA + H(+) = 3-oxobutanoyl-[ACP] + CO2 + CoA. It functions in the pathway lipid metabolism; fatty acid biosynthesis. Its function is as follows. Catalyzes the condensation reaction of fatty acid synthesis by the addition to an acyl acceptor of two carbons from malonyl-ACP. Catalyzes the first condensation reaction which initiates fatty acid synthesis and may therefore play a role in governing the total rate of fatty acid production. Possesses both acetoacetyl-ACP synthase and acetyl transacylase activities. Its substrate specificity determines the biosynthesis of branched-chain and/or straight-chain of fatty acids. This is Beta-ketoacyl-[acyl-carrier-protein] synthase III from Xanthomonas euvesicatoria pv. vesicatoria (strain 85-10) (Xanthomonas campestris pv. vesicatoria).